The chain runs to 471 residues: Ribulose bisphosphate carboxylase large chain (471 aa).

Lys5 is modified (N6,N6,N6-trimethyllysine). Residues Asn114 and Thr164 each coordinate substrate. Residue Lys166 is the Proton acceptor of the active site. Lys168 is a binding site for substrate. Mg(2+) is bound by residues Lys192, Asp194, and Glu195. Lys192 is modified (N6-carboxylysine). His285 serves as the catalytic Proton acceptor. Substrate-binding residues include Arg286, His318, and Ser370.

This sequence belongs to the RuBisCO large chain family. Type I subfamily. In terms of assembly, heterohexadecamer of 8 large chains and 8 small chains; disulfide-linked. The disulfide link is formed within the large subunit homodimers. Mg(2+) is required as a cofactor. The disulfide bond which can form in the large chain dimeric partners within the hexadecamer appears to be associated with oxidative stress and protein turnover.

It localises to the plastid. The protein resides in the chloroplast. The catalysed reaction is 2 (2R)-3-phosphoglycerate + 2 H(+) = D-ribulose 1,5-bisphosphate + CO2 + H2O. The enzyme catalyses D-ribulose 1,5-bisphosphate + O2 = 2-phosphoglycolate + (2R)-3-phosphoglycerate + 2 H(+). In terms of biological role, ruBisCO catalyzes two reactions: the carboxylation of D-ribulose 1,5-bisphosphate, the primary event in carbon dioxide fixation, as well as the oxidative fragmentation of the pentose substrate in the photorespiration process. Both reactions occur simultaneously and in competition at the same active site. This Chiococca alba (West Indian milkberry) protein is Ribulose bisphosphate carboxylase large chain.